A 477-amino-acid polypeptide reads, in one-letter code: Histone-lysine N-methyltransferase SUV39H2 (477 aa).

Residues 1 to 59 are disordered; the sequence is MATARAKARGSEAGARCHRAPGPPPRPKARRTARRRRAETLTARRSRPSAGERRAGSQR. Residues 27-37 are compositionally biased toward basic residues; sequence PKARRTARRRR. The 59-residue stretch at 118–176 folds into the Chromo domain; that stretch reads YEVEYLCDYKVAKGVEYYLVKWKGWPDSTNTWEPLRNLRCPQLLRQFSDDKKTYLAQER. Residues 256-314 enclose the Pre-SET domain; it reads FGCSCTDCFFDKCCPAEAGVVLAYNKKQQIKIQPGTPIYECNSRCRCGPECPNRIVQKG. Zn(2+) is bound by residues Cys258, Cys260, Cys263, Cys268, Cys269, Cys296, Cys300, Cys302, and Cys306. The region spanning 317 to 440 is the SET domain; sequence YSLCIFKTSN…AGEELTFDYQ (124 aa). Residues 328-330, Tyr371, and 397-398 each bind S-adenosyl-L-methionine; these read CGW and NH. Residue Cys400 participates in Zn(2+) binding. Phosphoserine occurs at positions 448, 451, and 455. Residues 461-477 enclose the Post-SET domain; it reads VRTQCKCGAETCRGYLN. Zn(2+)-binding residues include Cys465, Cys467, and Cys472.

Belongs to the class V-like SAM-binding methyltransferase superfamily. Histone-lysine methyltransferase family. Suvar3-9 subfamily. In terms of assembly, interacts with SMAD5. The large PER complex involved in the histone methylation is composed of at least PER2, CBX3, TRIM28, SUV39H1 and/or SUV39H2; CBX3 mediates the formation of the complex. Ubiquitinated by the DCX(DCAF13) E3 ubiquitin ligase complex, leading to its degradation. As to expression, testis specific; predominant expression in type B spermatogonia and preleptotene spermatocytes.

Its subcellular location is the nucleus. The protein localises to the chromosome. The protein resides in the centromere. It carries out the reaction L-lysyl(9)-[histone H3] + 3 S-adenosyl-L-methionine = N(6),N(6),N(6)-trimethyl-L-lysyl(9)-[histone H3] + 3 S-adenosyl-L-homocysteine + 3 H(+). Histone methyltransferase that specifically trimethylates 'Lys-9' of histone H3 using monomethylated H3 'Lys-9' as substrate. H3 'Lys-9' trimethylation represents a specific tag for epigenetic transcriptional repression by recruiting HP1 (CBX1, CBX3 and/or CBX5) proteins to methylated histones. Mainly functions in heterochromatin regions, thereby playing a central role in the establishment of constitutive heterochromatin at pericentric and telomere regions. H3 'Lys-9' trimethylation is also required to direct DNA methylation at pericentric repeats. SUV39H1 is targeted to histone H3 via its interaction with RB1 and is involved in many processes, such as cell cycle regulation, transcriptional repression and regulation of telomere length. May participate in regulation of higher-order chromatin organization during spermatogenesis. Recruited by the large PER complex to the E-box elements of the circadian target genes such as PER2 itself or PER1, contributes to the conversion of local chromatin to a heterochromatin-like repressive state through H3 'Lys-9' trimethylation. The protein is Histone-lysine N-methyltransferase SUV39H2 (Suv39h2) of Mus musculus (Mouse).